The primary structure comprises 557 residues: Protein Red (557 aa).

Residues 1 to 84 (MPERDSEPFS…RKKKSYYAKL (84 aa)) are disordered. A compositionally biased stretch (basic and acidic residues) spans 16–25 (DGHDVDDPHS). Over residues 42-53 (TPRAAPTSAPPS) the composition is skewed to low complexity. N6-acetyllysine occurs at positions 98 and 137. Lys-151 is covalently cross-linked (Glycyl lysine isopeptide (Lys-Gly) (interchain with G-Cter in SUMO2)). Residues 181 to 205 (KEKEEEELMEKPQKETKKDEDPENK) form a disordered region. Position 287 is a phosphoserine (Ser-287). Over residues 294–303 (RNKKLKKKDK) the composition is skewed to basic residues. The segment at 294 to 402 (RNKKLKKKDK…PIDVDKGPGS (109 aa)) is disordered. Basic and acidic residues predominate over residues 304-313 (GKLEEKKPPE). Glycyl lysine isopeptide (Lys-Gly) (interchain with G-Cter in SUMO2) cross-links involve residues Lys-310 and Lys-331. Residues 332–398 (TPRDKERERY…VDDEPIDVDK (67 aa)) show a composition bias toward basic and acidic residues. 17 repeat units span residues 342 to 343 (RE), 344 to 345 (RE), 346 to 347 (RD), 348 to 349 (RE), 350 to 351 (RD), 352 to 353 (RD), 354 to 355 (RD), 356 to 357 (RE), 358 to 359 (RE), 360 to 361 (RE), 362 to 363 (RD), 364 to 365 (RE), 366 to 367 (RE), 368 to 369 (RE), 370 to 371 (RD), 372 to 373 (RE), and 374 to 375 (RE). A 17 X 2 AA tandem repeats of R-[ED] region spans residues 342–375 (RERERDRERDRDRDRERERERDRERERERDRERE). Glycyl lysine isopeptide (Lys-Gly) (interchain with G-Cter in SUMO2) cross-links involve residues Lys-386, Lys-388, Lys-404, and Lys-408. A phosphoserine mark is found at Ser-417 and Ser-460. A Phosphothreonine modification is found at Thr-485. Glycyl lysine isopeptide (Lys-Gly) (interchain with G-Cter in SUMO2) cross-links involve residues Lys-496, Lys-501, and Lys-509. Ser-536 carries the phosphoserine modification. Glycyl lysine isopeptide (Lys-Gly) (interchain with G-Cter in SUMO2) cross-links involve residues Lys-541, Lys-543, Lys-544, and Lys-553.

Belongs to the RED family. Component of the spliceosome B complex. Interacts with SMU1. Interacts with MAD1L1. May interact with DHX15.

The protein resides in the nucleus. It is found in the nucleoplasm. The protein localises to the chromosome. Its subcellular location is the cytoplasm. It localises to the cytoskeleton. The protein resides in the spindle pole. In terms of biological role, involved in pre-mRNA splicing as a component of the spliceosome. Auxiliary spliceosomal protein that regulates selection of alternative splice sites in a small set of target pre-mRNA species. Required for normal mitotic cell cycle progression. Recruits MAD1L1 and MAD2L1 to kinetochores, and is required to trigger the spindle assembly checkpoint. Required for normal accumulation of SMU1. The sequence is that of Protein Red (IK) from Pongo abelii (Sumatran orangutan).